Here is a 148-residue protein sequence, read N- to C-terminus: Arginine repressor (148 aa).

The protein belongs to the ArgR family.

The protein resides in the cytoplasm. Its pathway is amino-acid biosynthesis; L-arginine biosynthesis [regulation]. In terms of biological role, regulates arginine biosynthesis genes. The sequence is that of Arginine repressor from Prosthecochloris aestuarii (strain DSM 271 / SK 413).